Here is a 125-residue protein sequence, read N- to C-terminus: Holo-[acyl-carrier-protein] synthase (125 aa).

Positions 8 and 57 each coordinate Mg(2+).

It belongs to the P-Pant transferase superfamily. AcpS family. Mg(2+) is required as a cofactor.

The protein localises to the cytoplasm. The enzyme catalyses apo-[ACP] + CoA = holo-[ACP] + adenosine 3',5'-bisphosphate + H(+). Functionally, transfers the 4'-phosphopantetheine moiety from coenzyme A to a Ser of acyl-carrier-protein. The chain is Holo-[acyl-carrier-protein] synthase from Solibacter usitatus (strain Ellin6076).